Consider the following 390-residue polypeptide: Queuine tRNA-ribosyltransferase (390 aa).

Asp-92 (proton acceptor) is an active-site residue. Residues 92 to 96 (DSGGF), Asp-146, Gln-195, and Gly-222 contribute to the substrate site. The segment at 253-259 (GVGTPED) is RNA binding. Asp-272 serves as the catalytic Nucleophile. An RNA binding; important for wobble base 34 recognition region spans residues 277–281 (TRNAR). Zn(2+) is bound by residues Cys-310, Cys-312, Cys-315, and His-354.

This sequence belongs to the queuine tRNA-ribosyltransferase family. In terms of assembly, homodimer. Within each dimer, one monomer is responsible for RNA recognition and catalysis, while the other monomer binds to the replacement base PreQ1. Requires Zn(2+) as cofactor.

It catalyses the reaction 7-aminomethyl-7-carbaguanine + guanosine(34) in tRNA = 7-aminomethyl-7-carbaguanosine(34) in tRNA + guanine. The protein operates within tRNA modification; tRNA-queuosine biosynthesis. Catalyzes the base-exchange of a guanine (G) residue with the queuine precursor 7-aminomethyl-7-deazaguanine (PreQ1) at position 34 (anticodon wobble position) in tRNAs with GU(N) anticodons (tRNA-Asp, -Asn, -His and -Tyr). Catalysis occurs through a double-displacement mechanism. The nucleophile active site attacks the C1' of nucleotide 34 to detach the guanine base from the RNA, forming a covalent enzyme-RNA intermediate. The proton acceptor active site deprotonates the incoming PreQ1, allowing a nucleophilic attack on the C1' of the ribose to form the product. After dissociation, two additional enzymatic reactions on the tRNA convert PreQ1 to queuine (Q), resulting in the hypermodified nucleoside queuosine (7-(((4,5-cis-dihydroxy-2-cyclopenten-1-yl)amino)methyl)-7-deazaguanosine). This chain is Queuine tRNA-ribosyltransferase, found in Acidovorax sp. (strain JS42).